A 559-amino-acid polypeptide reads, in one-letter code: Poly [ADP-ribose] polymerase 2 (559 aa).

Residues 1-58 form a disordered region; it reads MAPRRQRSGSGRRVLNEAKKVDNGNKATEDDSPPGKKMRTCQRKGPMAGGKDADRTKD. The segment at 1–83 is N-terminal region (NTR); that stretch reads MAPRRQRSGS…VDPECAAKLG (83 aa). The span at 14-29 shows a compositional bias: basic and acidic residues; the sequence is VLNEAKKVDNGNKATE. 2 consecutive short sequence motifs (nuclear localization signal) follow at residues 19 to 20 and 33 to 39; these read KK and PPGKKMR. N6-(ADP-ribosyl)lysine; alternate occurs at positions 36 and 37. N6-acetyllysine; alternate occurs at positions 36 and 37. The 98-residue stretch at 84–181 folds into the WGR domain; it reads KAHVYCEGDD…ENFEKVPGKY (98 aa). A PARP alpha-helical domain is found at 207–324; it reads ESQLDLRVQE…DIEIALKLVK (118 aa). Residue Ser-208 is modified to Phosphoserine. Positions 332 to 559 constitute a PARP catalytic domain; sequence HPLDQHYRNL…KIQFNFLQLW (228 aa). NAD(+) is bound by residues 404-406, Gly-413, Arg-420, and Ser-446; that span reads HGS. The active-site For poly [ADP-ribose] polymerase activity is the Glu-534.

This sequence belongs to the ARTD/PARP family. In terms of assembly, component of a base excision repair (BER) complex, containing at least XRCC1, PARP1, POLB and LRIG3. Homo- and heterodimer with PARP1. Interacts (via the PARP catalytic domain) with HPF1. Interacts with core nucleosomes. Post-translationally, auto poly-ADP-ribosylated on serine residues, leading to dissociation of the PARP2-HPF1 complex from chromatin. Poly-ADP-ribosylated by PARP1. Acetylation reduces DNA binding and enzymatic activity. In terms of processing, proteolytically cleaved by caspase-8 (CASP8) in response to apoptosis, leading to its inactivation. As to expression, widely expressed; the highest levels were in testis followed by ovary. Expression is correlated with proliferation, with higher levels occurring during early fetal development and organogenesis and in the highly proliferative cell compartments of adult.

It is found in the nucleus. It localises to the chromosome. The enzyme catalyses NAD(+) + (ADP-D-ribosyl)n-acceptor = nicotinamide + (ADP-D-ribosyl)n+1-acceptor + H(+).. It catalyses the reaction L-seryl-[protein] + NAD(+) = O-(ADP-D-ribosyl)-L-seryl-[protein] + nicotinamide + H(+). The catalysed reaction is L-aspartyl-[protein] + NAD(+) = 4-O-(ADP-D-ribosyl)-L-aspartyl-[protein] + nicotinamide. It carries out the reaction L-glutamyl-[protein] + NAD(+) = 5-O-(ADP-D-ribosyl)-L-glutamyl-[protein] + nicotinamide. With respect to regulation, ADP-ribosyltransferase activity is regulated via an allosteric activation mechanism. In absence of activation signal, PARP2 is autoinhibited by the PARP alpha-helical domain (also named HD region), which prevents effective NAD(+)-binding. Activity is highly stimulated by signals, which unfold the PARP alpha-helical domain, relieving autoinhibition. Poly-ADP-ribosyltransferase activity is tightly regulated and PARP2 is removed from damaged chromatin following initial poly-ADP-ribosylation of chromatin to avoid prolonged residence (trapping) that has cytotoxic consequences. CHD1L promotes PARP2 removal from chromatin. Poly-ADP-ribosyltransferase that mediates poly-ADP-ribosylation of proteins and plays a key role in DNA repair. Mediates glutamate, aspartate or serine ADP-ribosylation of proteins: the ADP-D-ribosyl group of NAD(+) is transferred to the acceptor carboxyl group of target residues and further ADP-ribosyl groups are transferred to the 2'-position of the terminal adenosine moiety, building up a polymer with an average chain length of 20-30 units. Serine ADP-ribosylation of proteins constitutes the primary form of ADP-ribosylation of proteins in response to DNA damage. Mediates glutamate and aspartate ADP-ribosylation of target proteins in absence of HPF1. Following interaction with HPF1, catalyzes serine ADP-ribosylation of target proteins; HPF1 conferring serine specificity by completing the PARP2 active site. PARP2 initiates the repair of double-strand DNA breaks: recognizes and binds DNA breaks within chromatin and recruits HPF1, licensing serine ADP-ribosylation of target proteins, such as histones, thereby promoting decompaction of chromatin and the recruitment of repair factors leading to the reparation of DNA strand breaks. HPF1 initiates serine ADP-ribosylation but restricts the polymerase activity of PARP2 in order to limit the length of poly-ADP-ribose chains. Specifically mediates formation of branched poly-ADP-ribosylation. Branched poly-ADP-ribose chains are specifically recognized by some factors, such as APLF. In addition to proteins, also able to ADP-ribosylate DNA: preferentially acts on 5'-terminal phosphates at DNA strand breaks termini in nicked duplex. In Mus musculus (Mouse), this protein is Poly [ADP-ribose] polymerase 2 (Parp2).